Consider the following 386-residue polypeptide: Small ribosomal subunit protein mS31 (386 aa).

Belongs to the mitochondrion-specific ribosomal protein mS31 family. Component of the mitochondrial ribosome small subunit (28S) which comprises a 12S rRNA and about 30 distinct proteins.

Its subcellular location is the mitochondrion. This is Small ribosomal subunit protein mS31 (MRPS31) from Bos taurus (Bovine).